Reading from the N-terminus, the 218-residue chain is Uracil-DNA glycosylase (218 aa).

Asp-59 functions as the Proton acceptor in the catalytic mechanism.

This sequence belongs to the uracil-DNA glycosylase (UDG) superfamily. UNG family.

The protein localises to the cytoplasm. The catalysed reaction is Hydrolyzes single-stranded DNA or mismatched double-stranded DNA and polynucleotides, releasing free uracil.. In terms of biological role, excises uracil residues from the DNA which can arise as a result of misincorporation of dUMP residues by DNA polymerase or due to deamination of cytosine. In Staphylococcus saprophyticus subsp. saprophyticus (strain ATCC 15305 / DSM 20229 / NCIMB 8711 / NCTC 7292 / S-41), this protein is Uracil-DNA glycosylase.